Consider the following 309-residue polypeptide: Methionyl-tRNA formyltransferase (309 aa).

Residue 107 to 110 coordinates (6S)-5,6,7,8-tetrahydrofolate; that stretch reads SLLP.

The protein belongs to the Fmt family.

The enzyme catalyses L-methionyl-tRNA(fMet) + (6R)-10-formyltetrahydrofolate = N-formyl-L-methionyl-tRNA(fMet) + (6S)-5,6,7,8-tetrahydrofolate + H(+). Functionally, attaches a formyl group to the free amino group of methionyl-tRNA(fMet). The formyl group appears to play a dual role in the initiator identity of N-formylmethionyl-tRNA by promoting its recognition by IF2 and preventing the misappropriation of this tRNA by the elongation apparatus. The protein is Methionyl-tRNA formyltransferase of Borrelia turicatae (strain 91E135).